A 504-amino-acid polypeptide reads, in one-letter code: ATP synthase subunit alpha (504 aa).

Residue 169–176 (GDRKTGKT) coordinates ATP.

The protein belongs to the ATPase alpha/beta chains family. As to quaternary structure, F-type ATPases have 2 components, CF(1) - the catalytic core - and CF(0) - the membrane proton channel. CF(1) has five subunits: alpha(3), beta(3), gamma(1), delta(1), epsilon(1). CF(0) has three main subunits: a(1), b(2) and c(9-12). The alpha and beta chains form an alternating ring which encloses part of the gamma chain. CF(1) is attached to CF(0) by a central stalk formed by the gamma and epsilon chains, while a peripheral stalk is formed by the delta and b chains.

Its subcellular location is the cell membrane. It catalyses the reaction ATP + H2O + 4 H(+)(in) = ADP + phosphate + 5 H(+)(out). Functionally, produces ATP from ADP in the presence of a proton gradient across the membrane. The alpha chain is a regulatory subunit. This is ATP synthase subunit alpha from Leuconostoc citreum (strain KM20).